The chain runs to 143 residues: Transcriptional regulator MraZ (143 aa).

2 SpoVT-AbrB domains span residues 5 to 47 (SHTP…PLAE) and 76 to 119 (ASDD…DSQR).

The protein belongs to the MraZ family. Forms oligomers.

It localises to the cytoplasm. Its subcellular location is the nucleoid. The protein is Transcriptional regulator MraZ of Parafrankia sp. (strain EAN1pec).